We begin with the raw amino-acid sequence, 465 residues long: tRNA-2-methylthio-N(6)-dimethylallyladenosine synthase (465 aa).

An MTTase N-terminal domain is found at 26–141; that stretch reads MRAHIITYGC…LPEALKANER (116 aa). [4Fe-4S] cluster is bound by residues C35, C71, C104, C173, C177, and C180. In terms of domain architecture, Radical SAM core spans 159-388; the sequence is PKGALSAHVT…IEKQKEWSYR (230 aa). The region spanning 391-453 is the TRAM domain; that stretch reads LEWVGKTVEV…PHLLFGEVVG (63 aa).

The protein belongs to the methylthiotransferase family. MiaB subfamily. As to quaternary structure, monomer. The cofactor is [4Fe-4S] cluster.

The protein resides in the cytoplasm. The enzyme catalyses N(6)-dimethylallyladenosine(37) in tRNA + (sulfur carrier)-SH + AH2 + 2 S-adenosyl-L-methionine = 2-methylsulfanyl-N(6)-dimethylallyladenosine(37) in tRNA + (sulfur carrier)-H + 5'-deoxyadenosine + L-methionine + A + S-adenosyl-L-homocysteine + 2 H(+). In terms of biological role, catalyzes the methylthiolation of N6-(dimethylallyl)adenosine (i(6)A), leading to the formation of 2-methylthio-N6-(dimethylallyl)adenosine (ms(2)i(6)A) at position 37 in tRNAs that read codons beginning with uridine. The sequence is that of tRNA-2-methylthio-N(6)-dimethylallyladenosine synthase from Thermus thermophilus (strain ATCC 27634 / DSM 579 / HB8).